The chain runs to 340 residues: Protein S-acyltransferase 10 (340 aa).

Helical transmembrane passes span 34–54 (LLLK…LFLF) and 66–86 (PWYM…YFVT). In terms of domain architecture, DHHC spans 162-212 (LTCGYCHVEQPPRTKHCHDCDRCVLQFDHHCVWLGTCIGQKNHSKFWWYIC). Cysteine 192 serves as the catalytic S-palmitoyl cysteine intermediate. 2 helical membrane passes run 207-227 (FWWY…MYVD) and 241-261 (IIIL…LLLI).

Belongs to the DHHC palmitoyltransferase family. In terms of tissue distribution, expressed in mature embryos, embryo sacs, cotyledons, whole seedlings, hydathodes, guard cells, sites of lateral root initiation, root tips and phloem, but not in xylem.

The protein resides in the vacuole membrane. The catalysed reaction is L-cysteinyl-[protein] + hexadecanoyl-CoA = S-hexadecanoyl-L-cysteinyl-[protein] + CoA. In terms of biological role, S-acyltransferase involved in protein lipid modification. Catalyzes the palmitoylation of proteins peripheral or integral to the tonoplast. Required for the tonoplast localization of CBL2, CBL3 and CBL6, but not for the plasma membrane localization of CBL9, for the endosome localization of RABF1 or for the endomembrane localization of RABF2B. This Arabidopsis thaliana (Mouse-ear cress) protein is Protein S-acyltransferase 10 (PAT10).